Reading from the N-terminus, the 425-residue chain is Polyadenylate-binding protein RBP47B' (425 aa).

RRM domains lie at 24 to 102 (RTLW…LNWA), 116 to 195 (HSIF…AATP), and 237 to 309 (TTIS…WSKN).

Belongs to the polyadenylate-binding RBP47 family. Interacts with the poly(A) tail of mRNA in nucleus.

Its subcellular location is the nucleus. It is found in the cytoplasmic granule. Its function is as follows. Heterogeneous nuclear ribonucleoprotein (hnRNP)-protein binding the poly(A) tail of mRNA and probably involved in some steps of pre-mRNA maturation. In Arabidopsis thaliana (Mouse-ear cress), this protein is Polyadenylate-binding protein RBP47B' (RBP47B').